The primary structure comprises 109 residues: Spermidine export protein MdtI (109 aa).

Helical transmembrane passes span 6 to 26 (WIHG…NVLL), 36 to 56 (CYGI…SQAV), 64 to 84 (AYAL…WVLF), and 88 to 108 (LNPK…MIKF).

The protein belongs to the drug/metabolite transporter (DMT) superfamily. Small multidrug resistance (SMR) (TC 2.A.7.1) family. MdtI subfamily. In terms of assembly, forms a complex with MdtJ.

The protein localises to the cell inner membrane. Functionally, catalyzes the excretion of spermidine. The protein is Spermidine export protein MdtI of Salmonella paratyphi A (strain ATCC 9150 / SARB42).